Consider the following 792-residue polypeptide: Ribonucleoside-diphosphate reductase large subunit (792 aa).

Residues Thr200, 215–216 (SC), Gly246, 415–419 (NLCAE), and 606–610 (PTAGT) each bind substrate. An intrachain disulfide couples Cys216 to Cys431. The active-site Proton acceptor is Asn415. Cys417 serves as the catalytic Cysteine radical intermediate. Glu419 (proton acceptor) is an active-site residue. The interval 758–781 (SPPHSGMKQDGAWLPGPKNPEEES) is disordered.

Belongs to the ribonucleoside diphosphate reductase large chain family. Heterotetramer composed of a homodimer of the large subunit (R1) and a homodimer of the small subunit (R2). Larger multisubunit protein complex are also active, composed of (R1)n(R2)n.

It carries out the reaction a 2'-deoxyribonucleoside 5'-diphosphate + [thioredoxin]-disulfide + H2O = a ribonucleoside 5'-diphosphate + [thioredoxin]-dithiol. Functionally, ribonucleoside-diphosphate reductase holoenzyme provides the precursors necessary for viral DNA synthesis. Allows virus growth in non-dividing cells, as well as reactivation from latency in infected hosts. Catalyzes the biosynthesis of deoxyribonucleotides from the corresponding ribonucleotides. The polypeptide is Ribonucleoside-diphosphate reductase large subunit (Human herpesvirus 8 type P (isolate GK18) (HHV-8)).